A 413-amino-acid chain; its full sequence is Serine hydroxymethyltransferase (413 aa).

(6S)-5,6,7,8-tetrahydrofolate is bound by residues Leu-117 and 121–123; that span reads GHL. The residue at position 226 (Lys-226) is an N6-(pyridoxal phosphate)lysine. Residue 349–351 coordinates (6S)-5,6,7,8-tetrahydrofolate; that stretch reads SPF.

The protein belongs to the SHMT family. In terms of assembly, homodimer. Pyridoxal 5'-phosphate is required as a cofactor.

It is found in the cytoplasm. It catalyses the reaction (6R)-5,10-methylene-5,6,7,8-tetrahydrofolate + glycine + H2O = (6S)-5,6,7,8-tetrahydrofolate + L-serine. Its pathway is one-carbon metabolism; tetrahydrofolate interconversion. It functions in the pathway amino-acid biosynthesis; glycine biosynthesis; glycine from L-serine: step 1/1. In terms of biological role, catalyzes the reversible interconversion of serine and glycine with tetrahydrofolate (THF) serving as the one-carbon carrier. This reaction serves as the major source of one-carbon groups required for the biosynthesis of purines, thymidylate, methionine, and other important biomolecules. Also exhibits THF-independent aldolase activity toward beta-hydroxyamino acids, producing glycine and aldehydes, via a retro-aldol mechanism. This is Serine hydroxymethyltransferase from Listeria innocua serovar 6a (strain ATCC BAA-680 / CLIP 11262).